Here is a 300-residue protein sequence, read N- to C-terminus: D-alanine--D-alanine ligase (300 aa).

An ATP-grasp domain is found at Lys99 to Lys293. Ile126–Thr181 contributes to the ATP binding site. Residues Asp248, Glu260, and Asn262 each contribute to the Mg(2+) site.

This sequence belongs to the D-alanine--D-alanine ligase family. It depends on Mg(2+) as a cofactor. The cofactor is Mn(2+).

Its subcellular location is the cytoplasm. The catalysed reaction is 2 D-alanine + ATP = D-alanyl-D-alanine + ADP + phosphate + H(+). It functions in the pathway cell wall biogenesis; peptidoglycan biosynthesis. Functionally, cell wall formation. This Clostridium botulinum (strain Langeland / NCTC 10281 / Type F) protein is D-alanine--D-alanine ligase.